We begin with the raw amino-acid sequence, 281 residues long: Bidirectional sugar transporter SWEET14 (281 aa).

The Extracellular portion of the chain corresponds to 1–6 (MVLTHN). The helical transmembrane segment at 7-27 (VLAVTFGVLGNIISFIVFLAP) threads the bilayer. A MtN3/slv 1 domain is found at 11–97 (TFGVLGNIIS…ILFITYANKK (87 aa)). Topologically, residues 28–42 (VPTFVRICKKKSIEG) are cytoplasmic. A helical transmembrane segment spans residues 43-63 (FESLPYVSALFSAMLWIYYAL). Residues 64 to 70 (QKDGAGF) are Extracellular-facing. A helical membrane pass occupies residues 71-91 (LLITINAVGCFIETIYIILFI). The Cytoplasmic portion of the chain corresponds to 92–104 (TYANKKARISTLK). The helical transmembrane segment at 105–125 (VLGLLNFLGFAAIILVCELLT) threads the bilayer. Topologically, residues 126–132 (KGSNREK) are extracellular. Residues 133-153 (VLGGICVGFSVCVFAAPLSIM) form a helical membrane-spanning segment. One can recognise a MtN3/slv 2 domain in the interval 133–216 (VLGGICVGFS…MILYVIFKYY (84 aa)). At 154-166 (RVVIRTKSVEFMP) the chain is on the cytoplasmic side. Residues 167–187 (FSLSLFLTISAITWLFYGLAI) form a helical membrane-spanning segment. Residues 188 to 192 (KDFYV) lie on the Extracellular side of the membrane. A helical membrane pass occupies residues 193 to 213 (ALPNILGAFLGAVQMILYVIF). Over 214 to 281 (KYYKTPLVVD…EDQMDKKMPN (68 aa)) the chain is Cytoplasmic. Over residues 244 to 259 (TPASGDLTVQPQTNPD) the composition is skewed to polar residues. Residues 244-281 (TPASGDLTVQPQTNPDVSHPIKTHGGDLEDQMDKKMPN) form a disordered region. The span at 267 to 281 (HGGDLEDQMDKKMPN) shows a compositional bias: basic and acidic residues.

This sequence belongs to the SWEET sugar transporter family. As to quaternary structure, forms homooligomers and/or heterooligomers.

It localises to the cell membrane. Functionally, mediates both low-affinity uptake and efflux of sugar across the plasma membrane. The sequence is that of Bidirectional sugar transporter SWEET14 from Arabidopsis thaliana (Mouse-ear cress).